Here is a 97-residue protein sequence, read N- to C-terminus: MEARHMLVTILLLSFVFMNIMKVEAQKVIGYPAIGRDGARGCSPKDPSCPQQPEKPYKRGCEKITRCERDRRKQAHLRNPRKVLDVVAVMAKAKQLY.

Positions 1–25 (MEARHMLVTILLLSFVFMNIMKVEA) are cleaved as a signal peptide. 2 disulfides stabilise this stretch: Cys-42-Cys-49 and Cys-61-Cys-67.

It belongs to the plant rapid alkalinization factor (RALF) family.

The protein localises to the secreted. Functionally, cell signaling peptide that may regulate plant stress, growth, and development. Mediates a rapid alkalinization of extracellular space by mediating a transient increase in the cytoplasmic Ca(2+) concentration leading to a calcium-dependent signaling events through a cell surface receptor and a concomitant activation of some intracellular mitogen-activated protein kinases. In Arabidopsis thaliana (Mouse-ear cress), this protein is Protein RALF-like 2 (RALFL2).